The sequence spans 503 residues: Ribose import ATP-binding protein RbsA 1 (503 aa).

2 consecutive ABC transporter domains span residues 5–241 (IALE…VGRA) and 253–495 (IGQP…AGIE). 37 to 44 (GENGAGKS) serves as a coordination point for ATP.

Belongs to the ABC transporter superfamily. Ribose importer (TC 3.A.1.2.1) family. In terms of assembly, the complex is composed of an ATP-binding protein (RbsA), two transmembrane proteins (RbsC) and a solute-binding protein (RbsB).

It localises to the cell inner membrane. The enzyme catalyses D-ribose(out) + ATP + H2O = D-ribose(in) + ADP + phosphate + H(+). In terms of biological role, part of the ABC transporter complex RbsABC involved in ribose import. Responsible for energy coupling to the transport system. In Rhizobium meliloti (strain 1021) (Ensifer meliloti), this protein is Ribose import ATP-binding protein RbsA 1.